A 37-amino-acid polypeptide reads, in one-letter code: Large ribosomal subunit protein bL36c (37 aa).

It belongs to the bacterial ribosomal protein bL36 family.

It localises to the plastid. Its subcellular location is the chloroplast. The polypeptide is Large ribosomal subunit protein bL36c (Lepidium virginicum (Virginia pepperweed)).